Here is a 162-residue protein sequence, read N- to C-terminus: MALARPRPRLGDLIEISRFGYAHWAIYVGDGYVVHLAPASEIAGAGAASVLSALTNKAIVKKELLSVVAGGDNYRVNNKHDDRYTPLPSNKIVKRAEELVGQELPYSLTSDNCEHFVNHLRYGVSRSDQVTGAVTTVGVAAGLLAAASLVGILLARSKRERQ.

Topologically, residues 1-133 (MALARPRPRL…VSRSDQVTGA (133 aa)) are cytoplasmic. Positions 13-129 (LIEISRFGYA…LRYGVSRSDQ (117 aa)) constitute an LRAT domain. Residues His23 and His35 contribute to the active site. The Acyl-thioester intermediate role is filled by Cys113. The chain crosses the membrane as a helical span at residues 134-154 (VTTVGVAAGLLAAASLVGILL). The Lumenal segment spans residues 155 to 162 (ARSKRERQ).

Belongs to the H-rev107 family. As to expression, expressed in liver, kidney, small intestine testis and colon. Undetectable in testis, placenta, salivary gland and fetal brain.

It localises to the cytoplasm. The protein localises to the membrane. The enzyme catalyses a 1,2-diacyl-sn-glycero-3-phosphocholine + H2O = a 1-acyl-sn-glycero-3-phosphocholine + a fatty acid + H(+). It carries out the reaction a 1,2-diacyl-sn-glycero-3-phosphocholine + H2O = a 2-acyl-sn-glycero-3-phosphocholine + a fatty acid + H(+). The catalysed reaction is a 1,2-diacyl-sn-glycero-3-phosphoethanolamine + a 1,2-diacyl-sn-glycero-3-phosphocholine = an N-acyl-1,2-diacyl-sn-glycero-3-phosphoethanolamine + a 1-acyl-sn-glycero-3-phosphocholine + H(+). It catalyses the reaction a 1,2-diacyl-sn-glycero-3-phosphoethanolamine + a 1,2-diacyl-sn-glycero-3-phosphocholine = an N-acyl-1,2-diacyl-sn-glycero-3-phosphoethanolamine + a 2-acyl-sn-glycero-3-phosphocholine + H(+). The enzyme catalyses 1,2-dihexadecanoyl-sn-glycero-3-phosphocholine + H2O = 1-hexadecanoyl-sn-glycero-3-phosphocholine + hexadecanoate + H(+). It carries out the reaction 1,2-dihexadecanoyl-sn-glycero-3-phosphocholine + H2O = 2-hexadecanoyl-sn-glycero-3-phosphocholine + hexadecanoate + H(+). The catalysed reaction is 1-hexadecanoyl-2-(9Z-octadecenoyl)-sn-glycero-3-phosphocholine + H2O = 2-(9Z-octadecenoyl)-sn-glycero-3-phosphocholine + hexadecanoate + H(+). It catalyses the reaction 1-hexadecanoyl-2-(9Z-octadecenoyl)-sn-glycero-3-phosphocholine + H2O = 1-hexadecanoyl-sn-glycero-3-phosphocholine + (9Z)-octadecenoate + H(+). The enzyme catalyses 1-hexadecanoyl-2-(5Z,8Z,11Z,14Z-eicosatetraenoyl)-sn-glycero-3-phosphocholine + H2O = 2-(5Z,8Z,11Z,14Z)-eicosatetraenoyl-sn-glycero-3-phosphocholine + hexadecanoate + H(+). It carries out the reaction 1-hexadecanoyl-2-(9Z,12Z-octadecadienoyl)-sn-glycero-3-phosphoethanolamine + H2O = 1-hexadecanoyl-sn-glycero-3-phosphoethanolamine + (9Z,12Z)-octadecadienoate + H(+). The catalysed reaction is 1-hexadecanoyl-2-(9Z,12Z-octadecadienoyl)-sn-glycero-3-phosphoethanolamine + H2O = 2-(9Z,12Z)-octadecadienoyl-sn-glycero-3-phosphoethanolamine + hexadecanoate + H(+). It catalyses the reaction 1-hexadecanoyl-2-(5Z,8Z,11Z,14Z-eicosatetraenoyl)-sn-glycero-3-phosphoethanolamine + H2O = 1-hexadecanoyl-sn-glycero-3-phosphoethanolamine + (5Z,8Z,11Z,14Z)-eicosatetraenoate + H(+). The enzyme catalyses 1-hexadecanoyl-2-(5Z,8Z,11Z,14Z-eicosatetraenoyl)-sn-glycero-3-phosphoethanolamine + H2O = 2-(5Z,8Z,11Z,14Z)-eicosatetraenoyl-sn-glycero-3-phosphoethanolamine + hexadecanoate + H(+). It carries out the reaction 1,2-di-(9Z-octadecenoyl)-sn-glycero-3-phosphoethanolamine + 1,2-dihexadecanoyl-sn-glycero-3-phosphocholine = N-hexadecanoyl-1,2-di-(9Z-octadecenoyl)-sn-glycero-3-phosphoethanolamine + 2-hexadecanoyl-sn-glycero-3-phosphocholine + H(+). The catalysed reaction is 1,2-di-(9Z-octadecenoyl)-sn-glycero-3-phosphoethanolamine + 1,2-dihexadecanoyl-sn-glycero-3-phosphocholine = N-hexadecanoyl-1,2-di-(9Z-octadecenoyl)-sn-glycero-3-phosphoethanolamine + 1-hexadecanoyl-sn-glycero-3-phosphocholine + H(+). It catalyses the reaction 1-hexanoyl-2-acyl-sn-glycero-3-phosphocholine + H2O = 1-hexanoyl-sn-glycero-3-phosphocholine + a fatty acid + H(+). The enzyme catalyses 1,2-diheptadecanoyl-sn-glycero-3-phosphoethanolamine + 1-(9Z-octadecenoyl)-2-hexadecanoyl-sn-glycero-3-phosphocholine = 1,2-diheptadecanoyl-sn-glycero-3-phospho-N-hexadecanoyl-ethanolamine + 1-(9Z-octadecenoyl)-sn-glycero-3-phosphocholine + H(+). It carries out the reaction 1,2-diheptadecanoyl-sn-glycero-3-phosphoethanolamine + 1-(9Z-octadecenoyl)-2-hexadecanoyl-sn-glycero-3-phosphocholine = 1,2-diheptadecanoyl-sn-glycero-3-phospho-N-(9Z-octadecenoyl)-ethanolamine + 2-hexadecanoyl-sn-glycero-3-phosphocholine + H(+). The catalysed reaction is 1,2-dihexanoyl-sn-glycero-3-phosphocholine + 1,2-diheptanoyl-sn-glycero-3-phosphocholine = 1-heptanoyl-2-hexanoyl-sn-glycero-3-phosphocholine + 1-hexanoyl-2-heptanoyl-sn-glycero-3-phosphocholine. It catalyses the reaction 1,2-diheptanoyl-sn-glycero-3-phosphocholine + 1,2-dihexadecanoyl-sn-glycero-3-phosphocholine = 1-hexadecanoyl-2-heptanoyl-sn-glycero-3-phosphocholine + 1-heptanoyl-2-hexadecanoyl-sn-glycero-3-phosphocholine. The enzyme catalyses 1,2-dihexanoyl-sn-glycero-3-phosphoethanolamine + 1,2-diheptanoyl-sn-glycero-3-phosphocholine = 1-heptanoyl-2-hexanoyl-sn-glycero-3-phosphoethanolamine + 1-hexanoyl-2-heptanoyl-sn-glycero-3-phosphocholine. It carries out the reaction 1-hexanoyl-2-acyl-sn-glycero-3-phosphocholine + H2O = hexanoate + a 2-acyl-sn-glycero-3-phosphocholine + H(+). The catalysed reaction is 1,2-dihexanoyl-sn-glycero-3-phosphoethanolamine + 2-heptanoyl-sn-glycero-3-phosphocholine = hexanoyl-sn-glycero-3-phosphoethanolamine + 1-hexanoyl-2-heptanoyl-sn-glycero-3-phosphocholine. Exhibits both phospholipase A1/2 and acyltransferase activities. Shows phospholipase A1 (PLA1) and A2 (PLA2) activity, catalyzing the calcium-independent release of fatty acids from the sn-1 or sn-2 position of glycerophospholipids. For most substrates, PLA1 activity is much higher than PLA2 activity. Shows O-acyltransferase activity, catalyzing the transfer of a fatty acyl group from glycerophospholipid to the hydroxyl group of lysophospholipid. Shows N-acyltransferase activity, catalyzing the calcium-independent transfer of a fatty acyl group at the sn-1 position of phosphatidylcholine (PC) and other glycerophospholipids to the primary amine of phosphatidylethanolamine (PE), forming N-acylphosphatidylethanolamine (NAPE), which serves as precursor for N-acylethanolamines (NAEs). Catalyzes N-acylation of PE using both sn-1 and sn-2 palmitoyl groups of PC as acyl donor. Exhibits high phospholipase A1/2 activity and low N-acyltransferase activity. In Homo sapiens (Human), this protein is Phospholipase A and acyltransferase 2.